A 459-amino-acid chain; its full sequence is Chromosomal replication initiator protein DnaA (459 aa).

The interval 1 to 74 (MMEMPIDNLW…ANVVQSILGH (74 aa)) is domain I, interacts with DnaA modulators. The tract at residues 74–117 (HPVEIYITVAKGEEFEEIGGGGEWELPTTNIINETPNQNRQPNT) is domain II. Positions 118-334 (ELNAKYVFSR…GALTRALAYI (217 aa)) are domain III, AAA+ region. G162, G164, K165, and T166 together coordinate ATP. A domain IV, binds dsDNA region spans residues 335 to 459 (SIWGLPMTVA…IKMNSRSRKP (125 aa)).

Belongs to the DnaA family. As to quaternary structure, oligomerizes as a right-handed, spiral filament on DNA at oriC.

It localises to the cytoplasm. Its function is as follows. Plays an essential role in the initiation and regulation of chromosomal replication. ATP-DnaA binds to the origin of replication (oriC) to initiate formation of the DNA replication initiation complex once per cell cycle. Binds the DnaA box (a 9 base pair repeat at the origin) and separates the double-stranded (ds)DNA. Forms a right-handed helical filament on oriC DNA; dsDNA binds to the exterior of the filament while single-stranded (ss)DNA is stabiized in the filament's interior. The ATP-DnaA-oriC complex binds and stabilizes one strand of the AT-rich DNA unwinding element (DUE), permitting loading of DNA polymerase. After initiation quickly degrades to an ADP-DnaA complex that is not apt for DNA replication. Binds acidic phospholipids. The chain is Chromosomal replication initiator protein DnaA from Nostoc sp. (strain PCC 7120 / SAG 25.82 / UTEX 2576).